Reading from the N-terminus, the 637-residue chain is Limonene/alpha-pinene synthase, chloroplastic (637 aa).

The transit peptide at 1 to 56 directs the protein to the chloroplast; sequence MALLSIVSLQVPKSCGLKSLISSSNVQKALCISTAVPTLRMRRRQKALVINMKLTT. Mg(2+) contacts are provided by D388, D392, and D540. The short motif at 388 to 392 is the DDXXD motif element; it reads DDMYD.

It belongs to the terpene synthase family. Tpsd subfamily. It depends on Mg(2+) as a cofactor. Mn(2+) is required as a cofactor. K(+) serves as cofactor.

Its subcellular location is the plastid. The protein localises to the chloroplast. The enzyme catalyses (2E)-geranyl diphosphate = (4S)-limonene + diphosphate. It carries out the reaction (2E)-geranyl diphosphate = (1S,5S)-alpha-pinene + diphosphate. The protein operates within terpene metabolism; oleoresin biosynthesis. Its function is as follows. Involved in defensive oleoresin formation in conifers in response to insect attack or other injury. Involved in monoterpene (C10) olefins biosynthesis. The polypeptide is Limonene/alpha-pinene synthase, chloroplastic (ag11) (Abies grandis (Grand fir)).